Reading from the N-terminus, the 285-residue chain is Small ribosomal subunit protein uS3 (285 aa).

Residues V39 to R107 form the KH type-2 domain. The interval G211 to E285 is disordered. Over residues R217 to G241 the composition is skewed to basic and acidic residues. Positions P242 to P255 are enriched in gly residues. 2 stretches are compositionally biased toward low complexity: residues A256–A267 and R276–E285.

This sequence belongs to the universal ribosomal protein uS3 family. Part of the 30S ribosomal subunit. Forms a tight complex with proteins S10 and S14.

Functionally, binds the lower part of the 30S subunit head. Binds mRNA in the 70S ribosome, positioning it for translation. The polypeptide is Small ribosomal subunit protein uS3 (Leptothrix cholodnii (strain ATCC 51168 / LMG 8142 / SP-6) (Leptothrix discophora (strain SP-6))).